The following is a 290-amino-acid chain: Thymidylate synthase (290 aa).

DUMP is bound by residues arginine 27 and 152–153; that span reads RR. The active-site Nucleophile is cysteine 172. Residues 192–195, asparagine 203, and 233–235 contribute to the dUMP site; these read RSAD and HVY. Aspartate 195 provides a ligand contact to (6R)-5,10-methylene-5,6,7,8-tetrahydrofolate. Position 289 (alanine 289) interacts with (6R)-5,10-methylene-5,6,7,8-tetrahydrofolate.

The protein belongs to the thymidylate synthase family. In terms of assembly, homodimer.

The catalysed reaction is dUMP + (6R)-5,10-methylene-5,6,7,8-tetrahydrofolate = 7,8-dihydrofolate + dTMP. It participates in pyrimidine metabolism; dTTP biosynthesis. In Ateles, this protein is Thymidylate synthase (TS).